A 346-amino-acid polypeptide reads, in one-letter code: UDP-3-O-acylglucosamine N-acyltransferase (346 aa).

His253 acts as the Proton acceptor in catalysis.

The protein belongs to the transferase hexapeptide repeat family. LpxD subfamily. In terms of assembly, homotrimer.

It carries out the reaction a UDP-3-O-[(3R)-3-hydroxyacyl]-alpha-D-glucosamine + a (3R)-hydroxyacyl-[ACP] = a UDP-2-N,3-O-bis[(3R)-3-hydroxyacyl]-alpha-D-glucosamine + holo-[ACP] + H(+). The protein operates within bacterial outer membrane biogenesis; LPS lipid A biosynthesis. Catalyzes the N-acylation of UDP-3-O-acylglucosamine using 3-hydroxyacyl-ACP as the acyl donor. Is involved in the biosynthesis of lipid A, a phosphorylated glycolipid that anchors the lipopolysaccharide to the outer membrane of the cell. In Rickettsia prowazekii (strain Madrid E), this protein is UDP-3-O-acylglucosamine N-acyltransferase.